Consider the following 555-residue polypeptide: NAD-dependent protein deacetylase sirtuin-1 (555 aa).

The Nuclear localization signal motif lies at 39–46; the sequence is PPKRKKRK. The Deacetylase sirtuin-type domain occupies 44 to 304; it reads KRKDINTIED…NELCHRLGGE (261 aa). The residue at position 46 (Lys-46) is an N6-acetyllysine. Residues 64–67 are required for interaction with the sumoylated form of CCAR2; the sequence is IIVL. Residues 69-88 and 153-156 each bind NAD(+); these read GAGV…DGIY and QNID. The active-site Proton acceptor is the His-171. Zn(2+) contacts are provided by Cys-179 and Cys-182. N6-acetyllysine is present on Lys-185. Positions 203 and 206 each coordinate Zn(2+). Residues Cys-203 and Cys-206 each carry the S-nitrosocysteine modification. Position 238 is an N6-acetyllysine (Lys-238). Positions 241–247 match the Nuclear export signal motif; it reads VDLLIVI. NAD(+) contacts are provided by residues 248-250, 273-275, and Cys-290; these read GSS and NRE. The residue at position 321 (Lys-321) is an N6-acetyllysine. A disordered region spans residues 335–354; that stretch reads LPPTPLHISEDSSSPERTVP. Thr-338 carries the post-translational modification Phosphothreonine. Ser-343 is modified (phosphoserine). Residues 345–354 show a composition bias toward polar residues; it reads DSSSPERTVP. At Thr-352 the chain carries Phosphothreonine. Lys-417 is subject to N6-acetyllysine. A phosphoserine mark is found at Ser-466 and Ser-468. The disordered stretch occupies residues 469-529; the sequence is EDDALSSSSC…GGSGADGGDQ (61 aa). Residues 473 to 493 show a composition bias toward low complexity; it reads LSSSSCGSNSDSGTCQSPSLE. A compositionally biased stretch (acidic residues) spans 494-514; that stretch reads EPLEDESEIEEFYNGLEDDAD. A Phosphoserine modification is found at Ser-552.

This sequence belongs to the sirtuin family. Class I subfamily. As to quaternary structure, interacts with XBP1 isoform 2. Found in a complex with PCAF and MYOD1. Interacts with FOXO1; the interaction deacetylates FOXO1, resulting in its nuclear retention and promotion of its transcriptional activity Component of the eNoSC complex, composed of SIRT1, SUV39H1 and RRP8. Interacts with HES1, HEY2 and PML. Interacts with RPS19BP1/AROS. Interacts with CCAR2 (via N-terminus); the interaction disrupts the interaction between SIRT1 and p53/TP53. Interacts with SETD7; the interaction induces the dissociation of SIRT1 from p53/TP53 and increases p53/TP53 activity. Interacts with MYCN, NR1I2, CREBZF, TSC2, TLE1, FOS, JUN, NR0B2, PPARG, NCOR, IRS1, IRS2 and NMNAT1. Interacts with HNF1A; the interaction occurs under nutrient restriction. Interacts with SUZ12; the interaction mediates the association with the PRC4 histone methylation complex which is specific as an association with PCR2 and PCR3 complex variants is not found. Interacts with HIV-1 tat. Interacts with BCL6; leads to a epigenetic repression of specific target genes. Interacts with CLOCK, BMAL1 and PER2. Interacts with PPARA; the interaction seems to be modulated by NAD(+) levels. Interacts with NR1H3 and this interaction is inhibited in the presence of CCAR2. Interacts with CHEK2. Interacts with p53/TP53. Exhibits a preferential interaction with sumoylated CCAR2 over its unmodified form. Interacts with PACS2. Interacts with SIRT7. Interacts with PUS7. Interacts with TULP3. Interacts with MORN3; the interaction enhances the ubiquitination of p53/TP53. Zn(2+) serves as cofactor. Post-translationally, methylated on multiple lysine residues; methylation is enhanced after DNA damage and is dispensable for deacetylase activity toward p53/TP53. In terms of processing, phosphorylated. Phosphorylated by STK4/MST1, resulting in inhibition of SIRT1-mediated p53/TP53 deacetylation. Phosphorylation by MAPK8/JNK1 at Thr-338 leads to increased nuclear localization and enzymatic activity. Phosphorylation at Thr-338 by DYRK1A and DYRK3 activates deacetylase activity and promotes cell survival. Phosphorylated by CaMK2, leading to increased p53/TP53 and NF-kappa-B p65/RELA deacetylation activity. S-nitrosylated by GAPDH, leading to inhibit the NAD-dependent protein deacetylase activity. Post-translationally, acetylated at various Lys residues. Deacetylated via an autocatalytic mechanism. Autodeacetylation at Lys-46 promotes its protein deacetylase activity. In terms of processing, ubiquitinated; leading to degradation. Deubiquitinated by USP22; leading to stabilization.

It is found in the nucleus. The protein resides in the PML body. Its subcellular location is the cytoplasm. It catalyses the reaction N(6)-acetyl-L-lysyl-[protein] + NAD(+) + H2O = 2''-O-acetyl-ADP-D-ribose + nicotinamide + L-lysyl-[protein]. The enzyme catalyses N(6)-propanoyl-L-lysyl-[protein] + NAD(+) + H2O = 3''-O-propanoyl-ADP-D-ribose + nicotinamide + L-lysyl-[protein]. It carries out the reaction N(6)-(2E)-butenoyl-L-lysyl-[protein] + NAD(+) + H2O = 2''-O-(2E)-but-2-enoyl-ADP-D-ribose + nicotinamide + L-lysyl-[protein]. Inhibited by nicotinamide. Activated by resveratrol (3,5,4'-trihydroxy-trans-stilbene), butein (3,4,2',4'-tetrahydroxychalcone), piceatannol (3,5,3',4'-tetrahydroxy-trans-stilbene), Isoliquiritigenin (4,2',4'-trihydroxychalcone), fisetin (3,7,3',4'-tetrahydroxyflavone) and quercetin (3,5,7,3',4'-pentahydroxyflavone). MAPK8/JNK1 and RPS19BP1/AROS act as positive regulators of deacetylation activity. Negatively regulated by CCAR2. Functionally, NAD-dependent protein deacetylase that links transcriptional regulation directly to intracellular energetics and participates in the coordination of several separated cellular functions such as cell cycle, response to DNA damage, metabolism, apoptosis and autophagy. Can modulate chromatin function through deacetylation of histones and can promote alterations in the methylation of histones and DNA, leading to transcriptional repression. Deacetylates a broad range of transcription factors and coregulators, thereby regulating target gene expression positively and negatively. Serves as a sensor of the cytosolic ratio of NAD(+)/NADH which is altered by glucose deprivation and metabolic changes associated with caloric restriction. Is essential in skeletal muscle cell differentiation and in response to low nutrients mediates the inhibitory effect on skeletal myoblast differentiation which also involves 5'-AMP-activated protein kinase (AMPK) and nicotinamide phosphoribosyltransferase (NAMPT). Component of the eNoSC (energy-dependent nucleolar silencing) complex, a complex that mediates silencing of rDNA in response to intracellular energy status and acts by recruiting histone-modifying enzymes. The eNoSC complex is able to sense the energy status of cell: upon glucose starvation, elevation of NAD(+)/NADP(+) ratio activates SIRT1, leading to histone H3 deacetylation followed by dimethylation of H3 at 'Lys-9' (H3K9me2) by SUV39H1 and the formation of silent chromatin in the rDNA locus. Deacetylates 'Lys-266' of SUV39H1, leading to its activation. Inhibits skeletal muscle differentiation by deacetylating PCAF and MYOD1. Deacetylates H2A and 'Lys-26' of H1-4. Deacetylates 'Lys-16' of histone H4 (in vitro). Involved in NR0B2/SHP corepression function through chromatin remodeling: Recruited to LRH1 target gene promoters by NR0B2/SHP thereby stimulating histone H3 and H4 deacetylation leading to transcriptional repression. Proposed to contribute to genomic integrity via positive regulation of telomere length; however, reports on localization to pericentromeric heterochromatin are conflicting. Proposed to play a role in constitutive heterochromatin (CH) formation and/or maintenance through regulation of the available pool of nuclear SUV39H1. Upon oxidative/metabolic stress decreases SUV39H1 degradation by inhibiting SUV39H1 polyubiquitination by MDM2. This increase in SUV39H1 levels enhances SUV39H1 turnover in CH, which in turn seems to accelerate renewal of the heterochromatin which correlates with greater genomic integrity during stress response. Deacetylates 'Lys-382' of p53/TP53 and impairs its ability to induce transcription-dependent proapoptotic program and modulate cell senescence. Deacetylates TAF1B and thereby represses rDNA transcription by the RNA polymerase I. Deacetylates MYC, promotes the association of MYC with MAX and decreases MYC stability leading to compromised transformational capability. Deacetylates FOXO3 in response to oxidative stress thereby increasing its ability to induce cell cycle arrest and resistance to oxidative stress but inhibiting FOXO3-mediated induction of apoptosis transcriptional activity; also leading to FOXO3 ubiquitination and protesomal degradation. Appears to have a similar effect on MLLT7/FOXO4 in regulation of transcriptional activity and apoptosis. Deacetylates DNMT1; thereby impairs DNMT1 methyltransferase-independent transcription repressor activity, modulates DNMT1 cell cycle regulatory function and DNMT1-mediated gene silencing. Deacetylates RELA/NF-kappa-B p65 thereby inhibiting its transactivating potential and augments apoptosis in response to TNF-alpha. Deacetylates HIF1A, KAT5/TIP60, RB1 and HIC1. Deacetylates FOXO1 resulting in its nuclear retention and enhancement of its transcriptional activity leading to increased gluconeogenesis in liver. Inhibits E2F1 transcriptional activity and apoptotic function, possibly by deacetylation. Involved in HES1- and HEY2-mediated transcriptional repression. In cooperation with MYCN seems to be involved in transcriptional repression of DUSP6/MAPK3 leading to MYCN stabilization by phosphorylation at 'Ser-62'. Deacetylates MEF2D. Required for antagonist-mediated transcription suppression of AR-dependent genes which may be linked to local deacetylation of histone H3. Represses HNF1A-mediated transcription. Required for the repression of ESRRG by CREBZF. Deacetylates NR1H3 AND NR1H2 and deacetylation of NR1H3 at 'Lys-434' positively regulates transcription of NR1H3:RXR target genes, promotes NR1H3 proteasomal degradation and results in cholesterol efflux; a promoter clearing mechanism after reach round of transcription is proposed. Involved in lipid metabolism: deacetylates LPIN1, thereby inhibiting diacylglycerol synthesis. Implicated in regulation of adipogenesis and fat mobilization in white adipocytes by repression of PPARG which probably involves association with NCOR1 and SMRT/NCOR2. Deacetylates p300/EP300 and PRMT1. Deacetylates ACSS2 leading to its activation, and HMGCS1 deacetylation. Involved in liver and muscle metabolism. Through deacetylation and activation of PPARGC1A is required to activate fatty acid oxidation in skeletal muscle under low-glucose conditions and is involved in glucose homeostasis. Involved in regulation of PPARA and fatty acid beta-oxidation in liver. Involved in positive regulation of insulin secretion in pancreatic beta cells in response to glucose; the function seems to imply transcriptional repression of UCP2. Proposed to deacetylate IRS2 thereby facilitating its insulin-induced tyrosine phosphorylation. Deacetylates SREBF1 isoform SREBP-1C thereby decreasing its stability and transactivation in lipogenic gene expression. Involved in DNA damage response by repressing genes which are involved in DNA repair, such as XPC and TP73, deacetylating XRCC6/Ku70, and facilitating recruitment of additional factors to sites of damaged DNA, such as SIRT1-deacetylated NBN can recruit ATM to initiate DNA repair and SIRT1-deacetylated XPA interacts with RPA2. Also involved in DNA repair of DNA double-strand breaks by homologous recombination and specifically single-strand annealing independently of XRCC6/Ku70 and NBN. Promotes DNA double-strand breaks by mediating deacetylation of SIRT6. Transcriptional suppression of XPC probably involves an E2F4:RBL2 suppressor complex and protein kinase B (AKT) signaling. Transcriptional suppression of TP73 probably involves E2F4 and PCAF. Deacetylates WRN thereby regulating its helicase and exonuclease activities and regulates WRN nuclear translocation in response to DNA damage. Deacetylates APEX1 at 'Lys-6' and 'Lys-7' and stimulates cellular AP endonuclease activity by promoting the association of APEX1 to XRCC1. Catalyzes deacetylation of ERCC4/XPF, thereby impairing interaction with ERCC1 and nucleotide excision repair (NER). Increases p53/TP53-mediated transcription-independent apoptosis by blocking nuclear translocation of cytoplasmic p53/TP53 and probably redirecting it to mitochondria. Deacetylates XRCC6/Ku70 at 'Lys-539' and 'Lys-542' causing it to sequester BAX away from mitochondria thereby inhibiting stress-induced apoptosis. Is involved in autophagy, presumably by deacetylating ATG5, ATG7 and MAP1LC3B/ATG8. Deacetylates AKT1 which leads to enhanced binding of AKT1 and PDK1 to PIP3 and promotes their activation. Proposed to play role in regulation of STK11/LBK1-dependent AMPK signaling pathways implicated in cellular senescence which seems to involve the regulation of the acetylation status of STK11/LBK1. Can deacetylate STK11/LBK1 and thereby increase its activity, cytoplasmic localization and association with STRAD; however, the relevance of such activity in normal cells is unclear. In endothelial cells is shown to inhibit STK11/LBK1 activity and to promote its degradation. Deacetylates SMAD7 at 'Lys-64' and 'Lys-70' thereby promoting its degradation. Deacetylates CIITA and augments its MHC class II transactivation and contributes to its stability. Deacetylates MECOM/EVI1. Deacetylates PML at 'Lys-487' and this deacetylation promotes PML control of PER2 nuclear localization. During the neurogenic transition, represses selective NOTCH1-target genes through histone deacetylation in a BCL6-dependent manner and leading to neuronal differentiation. Regulates the circadian expression of several core clock genes, including BMAL1, RORC, PER2 and CRY1 and plays a critical role in maintaining a controlled rhythmicity in histone acetylation, thereby contributing to circadian chromatin remodeling. Deacetylates BMAL1 and histones at the circadian gene promoters in order to facilitate repression by inhibitory components of the circadian oscillator. Deacetylates PER2, facilitating its ubiquitination and degradation by the proteasome. Protects cardiomyocytes against palmitate-induced apoptosis. Deacetylates XBP1 isoform 2; deacetylation decreases protein stability of XBP1 isoform 2 and inhibits its transcriptional activity. Deacetylates PCK1 and directs its activity toward phosphoenolpyruvate production promoting gluconeogenesis. Involved in the CCAR2-mediated regulation of PCK1 and NR1D1. Deacetylates CTNB1 at 'Lys-49'. In POMC (pro-opiomelanocortin) neurons, required for leptin-induced activation of PI3K signaling. In addition to protein deacetylase activity, also acts as a protein-lysine deacylase by mediating protein depropionylation and decrotonylation. Mediates depropionylation of Osterix (SP7). Catalyzes decrotonylation of histones; it however does not represent a major histone decrotonylase. Deacetylates SOX9; promoting SOX9 nuclear localization and transactivation activity. Involved in the regulation of centrosome duplication. Deacetylates CENATAC in G1 phase, allowing for SASS6 accumulation on the centrosome and subsequent procentriole assembly. Deacetylates NDC80/HEC1. In Rattus norvegicus (Rat), this protein is NAD-dependent protein deacetylase sirtuin-1.